The primary structure comprises 332 residues: Heat-inducible transcription repressor HrcA (332 aa).

The protein belongs to the HrcA family.

Negative regulator of class I heat shock genes (grpE-dnaK-dnaJ and groELS operons). Prevents heat-shock induction of these operons. In Mycoplasma mobile (strain ATCC 43663 / 163K / NCTC 11711) (Mesomycoplasma mobile), this protein is Heat-inducible transcription repressor HrcA.